The chain runs to 316 residues: N-acetyl-gamma-glutamyl-phosphate reductase (316 aa).

Cys136 is a catalytic residue.

It belongs to the NAGSA dehydrogenase family. Type 1 subfamily.

The protein localises to the cytoplasm. The enzyme catalyses N-acetyl-L-glutamate 5-semialdehyde + phosphate + NADP(+) = N-acetyl-L-glutamyl 5-phosphate + NADPH + H(+). It participates in amino-acid biosynthesis; L-arginine biosynthesis; N(2)-acetyl-L-ornithine from L-glutamate: step 3/4. In terms of biological role, catalyzes the NADPH-dependent reduction of N-acetyl-5-glutamyl phosphate to yield N-acetyl-L-glutamate 5-semialdehyde. In Xanthomonas campestris pv. campestris (strain 8004), this protein is N-acetyl-gamma-glutamyl-phosphate reductase.